Here is a 112-residue protein sequence, read N- to C-terminus: MKRKYILKKNWEFQKIIDSKKQFIFPTIILYYKKSDSFQIGISIPKKFAIAVKRNYLKRQIKSILDQIRPYNLSYEMILIVRKNYLNLNFLQKQQEIKKIIERISNGKEKIK.

It belongs to the RnpA family. In terms of assembly, consists of a catalytic RNA component (M1 or rnpB) and a protein subunit.

The enzyme catalyses Endonucleolytic cleavage of RNA, removing 5'-extranucleotides from tRNA precursor.. Its function is as follows. RNaseP catalyzes the removal of the 5'-leader sequence from pre-tRNA to produce the mature 5'-terminus. It can also cleave other RNA substrates such as 4.5S RNA. The protein component plays an auxiliary but essential role in vivo by binding to the 5'-leader sequence and broadening the substrate specificity of the ribozyme. The sequence is that of Ribonuclease P protein component from Mycoplasma mobile (strain ATCC 43663 / 163K / NCTC 11711) (Mesomycoplasma mobile).